A 405-amino-acid chain; its full sequence is Argininosuccinate synthase (405 aa).

12–20 contributes to the ATP binding site; the sequence is AYSGGLDTS. L-citrulline contacts are provided by tyrosine 90 and serine 95. Glycine 120 contacts ATP. L-aspartate is bound by residues threonine 122, asparagine 126, and aspartate 127. Asparagine 126 provides a ligand contact to L-citrulline. L-citrulline contacts are provided by arginine 130, serine 179, serine 188, glutamate 265, and tyrosine 277.

The protein belongs to the argininosuccinate synthase family. Type 1 subfamily. In terms of assembly, homotetramer.

It localises to the cytoplasm. The enzyme catalyses L-citrulline + L-aspartate + ATP = 2-(N(omega)-L-arginino)succinate + AMP + diphosphate + H(+). It participates in amino-acid biosynthesis; L-arginine biosynthesis; L-arginine from L-ornithine and carbamoyl phosphate: step 2/3. The protein is Argininosuccinate synthase of Clostridium perfringens (strain 13 / Type A).